Consider the following 286-residue polypeptide: Pantothenate synthetase (286 aa).

30 to 37 provides a ligand contact to ATP; sequence MGNLHAGH. Histidine 37 acts as the Proton donor in catalysis. Glutamine 61 serves as a coordination point for (R)-pantoate. Beta-alanine is bound at residue glutamine 61. 149 to 152 contributes to the ATP binding site; the sequence is GEKD. (R)-pantoate is bound at residue glutamine 155. Residues valine 178 and 186 to 189 contribute to the ATP site; that span reads MSSR.

This sequence belongs to the pantothenate synthetase family. As to quaternary structure, homodimer.

The protein localises to the cytoplasm. It catalyses the reaction (R)-pantoate + beta-alanine + ATP = (R)-pantothenate + AMP + diphosphate + H(+). The protein operates within cofactor biosynthesis; (R)-pantothenate biosynthesis; (R)-pantothenate from (R)-pantoate and beta-alanine: step 1/1. In terms of biological role, catalyzes the condensation of pantoate with beta-alanine in an ATP-dependent reaction via a pantoyl-adenylate intermediate. The sequence is that of Pantothenate synthetase from Thioalkalivibrio sulfidiphilus (strain HL-EbGR7).